A 454-amino-acid polypeptide reads, in one-letter code: Mitochondrial dynamics protein MID49 (454 aa).

Residues 1 to 22 are Mitochondrial intermembrane-facing; the sequence is MAEFSQKRGKRRGDEGLGSMVD. Residues 23–43 traverse the membrane as a helical segment; sequence FLLANARLVLGVGGAAVLGIA. The Cytoplasmic segment spans residues 44-454; the sequence is TLAVKRFIDR…SGLQEPEGLL (411 aa). The segment at 76-119 is disordered; it reads ATPHLQPRPPPAALSQPVLPLAPSSSAPEGPAKSDPEVTPQLSS. The segment covering 88–108 has biased composition (low complexity); sequence ALSQPVLPLAPSSSAPEGPAK.

The protein belongs to the MID49/MID51 family. Interacts with DNM1L.

The protein resides in the mitochondrion outer membrane. In terms of biological role, mitochondrial outer membrane protein which regulates mitochondrial organization. It is required for mitochondrial fission and promotes the recruitment and association of the fission mediator dynamin-related protein 1 (DNM1L) to the mitochondrial surface independently of the mitochondrial fission FIS1 and MFF proteins. Regulates DNM1L GTPase activity. The sequence is that of Mitochondrial dynamics protein MID49 (MIEF2) from Pongo abelii (Sumatran orangutan).